Here is a 91-residue protein sequence, read N- to C-terminus: MARITVEDALKVAGNRFALVLLAVQRSKQLLRGARPLTNVRNNREIVAALREIADNKVYFSHPEYLMGAKEDFKLIADDTTEFIGDEDYVE.

This sequence belongs to the RNA polymerase subunit omega family. The RNAP catalytic core consists of 2 alpha, 1 beta, 1 beta' and 1 omega subunit. When a sigma factor is associated with the core the holoenzyme is formed, which can initiate transcription.

The enzyme catalyses RNA(n) + a ribonucleoside 5'-triphosphate = RNA(n+1) + diphosphate. Promotes RNA polymerase assembly. Latches the N- and C-terminal regions of the beta' subunit thereby facilitating its interaction with the beta and alpha subunits. The protein is DNA-directed RNA polymerase subunit omega of Syntrophus aciditrophicus (strain SB).